The chain runs to 393 residues: Protein TBATA (393 aa).

Disordered regions lie at residues 1 to 39 (MTTE…VGLQ), 168 to 188 (VPIG…DTWR), 202 to 264 (TKEI…DGGV), and 340 to 393 (EPQE…KAES). Residues 20–34 (PQPETKPENLPRSHG) are compositionally biased toward basic and acidic residues. Positions 173–185 (PQSNRNPQLSTSD) are enriched in polar residues. Basic and acidic residues-rich tracts occupy residues 205-227 (IQPK…REQG) and 380-393 (PSED…KAES).

The protein belongs to the TBATA family. In terms of assembly, interacts with KIF17. Interacts with UBA3. As to expression, expressed in the subcapsular region of the thymus and lymph node (at protein level). Highly expressed in thymic cortical stromal cells and testis. Lower levels found in brain cortex, hippocampus, kidney, cerebellum, skeletal muscle, epididymis and ovary. No expression detected in other lymphoid organs including bone marrow and spleen. Isoform 1 and isoform 2 are expressed predominantly in testis. Isoform 3, isoform 4 and isoform 5 are expressed predominantly in thymus although isoform 3 is also expressed in testis. In the CNS, highly expressed in restricted areas, the cerebellum and hippocampus.

The protein localises to the cytoplasm. The protein resides in the cytosol. It is found in the nucleus. Functionally, isoform 1 and isoform 2 may play a role in spermatid differentiation. Isoform 1 and isoform 2 regulate thymus function by modulating stromal cell proliferation via interference with the NEDD8 pathway. This chain is Protein TBATA (Tbata), found in Mus musculus (Mouse).